Here is a 312-residue protein sequence, read N- to C-terminus: Malate dehydrogenase (312 aa).

Residues 7-13 and aspartate 34 each bind NAD(+); that span reads GAAGGIG. Residues arginine 81 and arginine 87 each contribute to the substrate site. Residues asparagine 94 and 117-119 contribute to the NAD(+) site; that span reads ITN. Positions 119 and 153 each coordinate substrate. Histidine 177 serves as the catalytic Proton acceptor. Methionine 227 serves as a coordination point for NAD(+).

Belongs to the LDH/MDH superfamily. MDH type 1 family. As to quaternary structure, homodimer.

It catalyses the reaction (S)-malate + NAD(+) = oxaloacetate + NADH + H(+). In terms of biological role, catalyzes the reversible oxidation of malate to oxaloacetate. This is Malate dehydrogenase from Salmonella newport (strain SL254).